The chain runs to 318 residues: MTSAYDKLHSTLDVKAFGRVAVLYGGKSAEREVSLKSGAAVIDALTTAGVDVVAIDVGDDLLARLQSEEIDRAFIILHGRGGEDGSMQGLLECLGIPYTGSGILASALAMDKLRTKQVWQSLGIPTPRHAVLASESDCLQASTELGFPLIVKPAHEGSSIGMAKVNSAQELVAAWQDAAKYDSQVLVEQWIHGPEFTIAVLRGQVLPPIALGTPHVFYDYDAKYIANDTQYRIPCGLDSAKEQELIDLTARACDAIGIEGWGRLDVMQDEQGRFWLLEVNTAPGMTDHSLVPMAARAAGLDFQQLVLAILAESVATRG.

In terms of domain architecture, ATP-grasp spans 116–311; sequence KQVWQSLGIP…FQQLVLAILA (196 aa). An ATP-binding site is contributed by 142 to 197; that stretch reads STELGFPLIVKPAHEGSSIGMAKVNSAQELVAAWQDAAKYDSQVLVEQWIHGPEFT. Mg(2+)-binding residues include D265, E278, and N280.

Belongs to the D-alanine--D-alanine ligase family. Mg(2+) serves as cofactor. Requires Mn(2+) as cofactor.

Its subcellular location is the cytoplasm. The catalysed reaction is 2 D-alanine + ATP = D-alanyl-D-alanine + ADP + phosphate + H(+). The protein operates within cell wall biogenesis; peptidoglycan biosynthesis. In terms of biological role, cell wall formation. This chain is D-alanine--D-alanine ligase, found in Pseudomonas putida (strain GB-1).